The primary structure comprises 356 residues: OVARIAN TUMOR DOMAIN-containing deubiquitinating enzyme 10 (356 aa).

The interval 86 to 117 (DYSHQNQQQQHQQEGYTNNYSNNNNGYAWNDQ) is disordered. Residues 89–115 (HQNQQQQHQQEGYTNNYSNNNNGYAWN) are compositionally biased toward low complexity. The region spanning 213–337 (FTEVKVPGDG…EVHYNAIYLN (125 aa)) is the OTU domain. Residue Asp-221 is part of the active site. Cys-224 acts as the Nucleophile in catalysis. Residue His-330 is part of the active site.

This sequence belongs to the peptidase C85 family.

It carries out the reaction Thiol-dependent hydrolysis of ester, thioester, amide, peptide and isopeptide bonds formed by the C-terminal Gly of ubiquitin (a 76-residue protein attached to proteins as an intracellular targeting signal).. Functionally, hydrolase that can remove conjugated ubiquitin from proteins in vitro and may therefore play an important regulatory role at the level of protein turnover by preventing degradation. Cysteine protease with a preference for 'Lys-63' over 'Lys-48' over 'Met-1' -linked ubiquitin (UB) tetramers as substrates. Also cleaves RUB-GST fusion. In Arabidopsis thaliana (Mouse-ear cress), this protein is OVARIAN TUMOR DOMAIN-containing deubiquitinating enzyme 10.